A 644-amino-acid chain; its full sequence is Sodium/hydrogen exchanger 9 (644 aa).

Residues 1–20 (MAGQLRFTSGKDEDHFQHQG) are Lumenal-facing. Residues 21 to 41 (AVELLAFNFLLILTILTIWLF) form a helical membrane-spanning segment. The Cytoplasmic portion of the chain corresponds to 42 to 45 (KNHR). A helical transmembrane segment spans residues 46 to 66 (FRFLHETGGAMVYGLIMGLIL). Topologically, residues 67 to 126 (RYATAPTDIDSGTVYNCGNLFFSPSTLLVNITDQVYEYKYQREINQHNISPHQGNAILEK) are lumenal. A helical membrane pass occupies residues 127–147 (MTFDPEIFFNVLLPPIIFHAG). Over 148–164 (YSLKKRHFFQNLGSILT) the chain is Cytoplasmic. The helical transmembrane segment at 165–185 (YAFLGTAISCVVIGLIMYGFV) threads the bilayer. Residues 186–203 (KAMVHAGQLKSGDFHFTD) lie on the Lumenal side of the membrane. Residues 204–224 (CLFFGSLMSATDPVTVLAIFH) traverse the membrane as a helical segment. The Cytoplasmic portion of the chain corresponds to 225-235 (ELHVDPDLYTL). The chain crosses the membrane as a helical span at residues 236–256 (LFGESVLNDAVAIVLTYSISI). The Lumenal segment spans residues 257–277 (YSPKENPNAFDTAAFFQSVGN). Residues 278 to 298 (FLGIFAGSFAMGSAYAVVTAL) form a helical membrane-spanning segment. At 299 to 309 (LTKFTKLREFP) the chain is on the cytoplasmic side. The helical transmembrane segment at 310 to 327 (MLETGLFFLLSWSAFLSA) threads the bilayer. At 328–333 (EAAGLT) the chain is on the lumenal side. The chain crosses the membrane as a helical span at residues 334 to 350 (GIVAVLFCGVTQAHYTY). Over 351–364 (NNLSSDSKLRTKQL) the chain is Cytoplasmic. Residues 365–385 (FEFMNFLAENVIFCYMGLALF) traverse the membrane as a helical segment. A topological domain (lumenal) is located at residue T386. A helical membrane pass occupies residues 387 to 407 (FQNHIFNALFILGAFLAIFVA). The Cytoplasmic portion of the chain corresponds to 408–429 (RACNIYPLSFLLNLGRKQKIPW). Residues 430–450 (NFQHMMMFSGLRGAIAFALAI) traverse the membrane as a helical segment. Residues 451-465 (RNTESQPKQMMFTTT) lie on the Lumenal side of the membrane. Residues 466 to 486 (LLLVFFTVWVFGGGTTPMLTW) form a helical membrane-spanning segment. Residues 487–644 (LQIRVGVDLD…EQTRGQPQMD (158 aa)) lie on the Cytoplasmic side of the membrane. Residues 590 to 644 (YQEQSPSPSSPTTKLALDQKSSGQTPGKENIYEGDLGLGGYDLKLEQTRGQPQMD) form a disordered region.

The protein belongs to the monovalent cation:proton antiporter 1 (CPA1) transporter (TC 2.A.36) family. In terms of assembly, homodimer; phosphatidylinositol-4,5-bisphosphate (PIP2) and phosphatidylinositol 3,4,5-trisphosphate (PIP3) could be involved in the dimer stabilization. Interacts (via the C-terminus) with RACK1. Interacts with CHP1. Expressed in the brain. Highly expressed in immune cells, specifically macrophages.

It localises to the late endosome membrane. Its subcellular location is the cell membrane. The protein localises to the early endosome membrane. The protein resides in the recycling endosome membrane. It is found in the cytoplasmic vesicle. It localises to the phagosome membrane. The enzyme catalyses Na(+)(in) + H(+)(out) = Na(+)(out) + H(+)(in). It carries out the reaction K(+)(in) + H(+)(out) = K(+)(out) + H(+)(in). In terms of biological role, endosomal Na(+), K(+)/H(+) antiporter. Mediates the electroneutral exchange of endosomal luminal H(+) for a cytosolic Na(+) or K(+). By facilitating proton efflux, SLC9A9 counteracts the acidity generated by vacuolar (V)-ATPase, thereby limiting luminal acidification. Regulates organellar pH and consequently, endosome maturation and endocytic trafficking of plasma membrane receptors and neurotransporters. Promotes the recycling of transferrin receptors back to the cell surface to facilitate additional iron uptake in the brain. Regulates synaptic transmission by regulating the luminal pH of axonal endosomes. Regulates phagosome lumenal pH, thus affecting phagosome maturation, and consequently, microbicidal activity in macrophages. Can also be active at the cell surface of specialized cells, e.g., in the inner ear hair bundles uses the high K(+) of the endolymph to regulate intracelular pH. The protein is Sodium/hydrogen exchanger 9 (Slc9a9) of Mus musculus (Mouse).